We begin with the raw amino-acid sequence, 272 residues long: MKRTAFFISDGTGITAEALGQSLLAQFEFIEFEKITLPYIDSLEKARKAVARIDKASEIDGNKPVIFDTIVNSEIRAEIRKSQGYMIDIFGTFLEPLEQELGSKSTYTVGKSHSIVSNSSYNRRIDAMNYALENDDGARVRYYNEADIILVGVSRSGKTPTCIYLALQYGIKAANFPLTEDDILDQRLPESLRSYREKIFGLTIDPERLAVIRNERKPNSKYASIKQCNYEVEEVELMYRRERIPYLNSTDYSVEEISTRIMMMTGIERHIR.

Gly-152–Thr-159 contacts ADP.

This sequence belongs to the pyruvate, phosphate/water dikinase regulatory protein family. PSRP subfamily.

The enzyme catalyses [pyruvate, water dikinase] + ADP = [pyruvate, water dikinase]-phosphate + AMP + H(+). It catalyses the reaction [pyruvate, water dikinase]-phosphate + phosphate + H(+) = [pyruvate, water dikinase] + diphosphate. In terms of biological role, bifunctional serine/threonine kinase and phosphorylase involved in the regulation of the phosphoenolpyruvate synthase (PEPS) by catalyzing its phosphorylation/dephosphorylation. The protein is Putative phosphoenolpyruvate synthase regulatory protein of Hahella chejuensis (strain KCTC 2396).